A 721-amino-acid polypeptide reads, in one-letter code: MVARKFVVRHEDSSFDVDYNTEDGLEVLRFLIFSLTLVPPEEQKIVAEDDNRLVSDESDLASLSERLRLVSVGEDSVENSDAEMLKSDEELARMLQAEEDAIMFQQFVAARDNGEFEGRIRPYVSQVLMYEDPVRQDAARKTVPKDELEEKALVSLAKEGNFEPSKEERDYAFLLQLLFWFKKSFRWVNEPPCDFCGNKTIGQGMGNPLTSELAYGANRVEIYRCTMCPTTTRFPRYNDPLKLVETKKGRCGEWANCFTLYCRTFGYDSRLIMDFTDHVWTECYSHSLKRWIHLDPCEGVYDKPMLYEKGWNKKLNYVIAISKDGVCDVTKRYTKKWHEVLSRRTLTTESSLQDGLRTLTRERRRSLMFESLSKLELRDRNEQEELERNLHSADNASVSLPGRQSGDREWRIMRSEFGSDENSSVSSSSCPVRKCVDDHVTNIYDSFLPILTQFVEDGLPVARTNEVLKMIKQVLVDLKNAPYKTRKARLTLDSDNSSSFPEQFLPALGDLLLALSLKSERDTNGKSVTISVDGKLTKTAIALPVALDALRELVADLSKYQNLNKDSLSFPLVKQNRVCSGSVLASGEELPSGIATAAFDGIQESKWEEPNGAKGCWIVYKTLYNQMHQLIAYELMSANDAPERDPKDWILEGSNDGGSTWCVLDKQTSQVFEERFQRKSYKITTPGFQANLFRFRFLSVRDVNSTSRLQLGSIDLYRSHQ.

Residues Cys-193, Cys-196, Cys-225, and Cys-228 each contribute to the Zn(2+) site. Catalysis depends on Cys-251, which acts as the Nucleophile. Catalysis depends on residues His-278 and Asp-295.

The protein belongs to the transglutaminase-like superfamily. PNGase family. It depends on Zn(2+) as a cofactor.

The protein localises to the cytoplasm. The catalysed reaction is Hydrolysis of an N(4)-(acetyl-beta-D-glucosaminyl)asparagine residue in which the glucosamine residue may be further glycosylated, to yield a (substituted) N-acetyl-beta-D-glucosaminylamine and a peptide containing an aspartate residue.. Functionally, specifically deglycosylates the denatured form of N-linked glycoproteins in the cytoplasm and assists their proteasome-mediated degradation. Cleaves the beta-aspartyl-glucosamine (GlcNAc) of the glycan and the amide side chain of Asn, converting Asn to Asp. Prefers proteins containing high-mannose over those bearing complex type oligosaccharides. Can recognize misfolded proteins in the endoplasmic reticulum that are exported to the cytosol to be destroyed and deglycosylate them, while it has no activity toward native proteins. Deglycosylation is a prerequisite for subsequent proteasome-mediated degradation of some, but not all, misfolded glycoproteins. The protein is Peptide-N(4)-(N-acetyl-beta-glucosaminyl)asparagine amidase (PNG1) of Arabidopsis thaliana (Mouse-ear cress).